The following is a 689-amino-acid chain: MSGRNNNKLPTNLPQLQNLIKRDPASYREEFLQQYKHYLSVIEIFKLQPDKPNKDLSTLVMFMAQTAHCFQQYLEDFPEQLKSLLCTHHTVMDPDQRMTLCKALIMLRNKNLISPSVLLELFFELLRCQDKLLRKTLYTHIVTDIKNINAKHKNNKVNTTLQNFMYTMLRDNNAIAAKISLDVMIELYRRNIWNDAKTVNVITTACFSKVTKILVAALKFFLGKDEDEKKDSDSESEDEGPTARDLMVRYSTGKKNTKNKKKLDKAMKVLKKHKKKKRPEVFNFSAIHLVHDPQEFAEKLLKQLEASKERFEVKLMHMDLISRLVGIHELFLFNFYPFVQRFLQPHQREVTKILLYAAQATHHLVPPEISQSVLKTIANNFVTDRNSGEVMTVGINAIKEVTARCPLAMTEELLQDLAQYKTHRDKNVSMSARGLIQLFRSLNPDMLQKKFRGKPTEASKEARIHAYGELDAKDYIPGAEVLEVEQEKKEEPEEDDGWESASLSDDDEDGEWIDVHHSSDEEQQEMAEKIQAMPTEERIAKAATVSGSRLLTQEDFKKIRLAQLAKEMNNAPGKSMKRKNIEIDSDEEERSGELLSLRDIEHLHKKPKSDKETRLATVLAGRTDRKEFVRKKTKMNPHASSTNKEKKKNKNFMMMRYSQNIRSKKKRSFRDKQIALRDSLLKKRKRLMK.

Disordered stretches follow at residues 227–260 (DEKKDSDSESEDEGPTARDLMVRYSTGKKNTKNK), 485–512 (EQEKKEEPEEDDGWESASLSDDDEDGEW), and 623–689 (TDRK…RLMK). Residues 258–319 (KNKKKLDKAM…RFEVKLMHMD (62 aa)) adopt a coiled-coil conformation. Over residues 492–512 (PEEDDGWESASLSDDDEDGEW) the composition is skewed to acidic residues. Positions 670–681 (RDKQIALRDSLL) are enriched in basic and acidic residues.

The protein belongs to the SDA1 family.

Its subcellular location is the nucleus. It is found in the nucleolus. Functionally, required for 60S pre-ribosomal subunits export to the cytoplasm. This is Protein SDA1 homolog (sdad1) from Xenopus laevis (African clawed frog).